Here is a 341-residue protein sequence, read N- to C-terminus: Very-long-chain 3-oxoacyl-CoA reductase (341 aa).

A helical membrane pass occupies residues Ala-22–Ile-42. NADP(+) is bound by residues Leu-67, Asp-123, Asp-131, Asn-150, Tyr-217, Lys-221, Val-250, and Thr-252. Catalysis depends on Tyr-217, which acts as the Proton donor. Lys-221 acts as the Lowers pKa of active site Tyr in catalysis.

This sequence belongs to the short-chain dehydrogenases/reductases (SDR) family.

It localises to the endoplasmic reticulum membrane. It carries out the reaction a very-long-chain (3R)-3-hydroxyacyl-CoA + NADP(+) = a very-long-chain 3-oxoacyl-CoA + NADPH + H(+). It functions in the pathway lipid metabolism; fatty acid biosynthesis. Its function is as follows. Component of the microsomal membrane bound fatty acid elongation system, which produces the 26-carbon very long-chain fatty acids (VLCFA) from palmitate. Catalyzes the reduction of the 3-ketoacyl-CoA intermediate that is formed in each cycle of fatty acid elongation. VLCFAs serve as precursors for ceramide and sphingolipids. The protein is Very-long-chain 3-oxoacyl-CoA reductase of Pyrenophora tritici-repentis (strain Pt-1C-BFP) (Wheat tan spot fungus).